The following is a 110-amino-acid chain: Large ribosomal subunit protein uL22 (110 aa).

The protein belongs to the universal ribosomal protein uL22 family. Part of the 50S ribosomal subunit.

Functionally, this protein binds specifically to 23S rRNA; its binding is stimulated by other ribosomal proteins, e.g. L4, L17, and L20. It is important during the early stages of 50S assembly. It makes multiple contacts with different domains of the 23S rRNA in the assembled 50S subunit and ribosome. In terms of biological role, the globular domain of the protein is located near the polypeptide exit tunnel on the outside of the subunit, while an extended beta-hairpin is found that lines the wall of the exit tunnel in the center of the 70S ribosome. The chain is Large ribosomal subunit protein uL22 from Teredinibacter turnerae (strain ATCC 39867 / T7901).